Reading from the N-terminus, the 401-residue chain is Argininosuccinate synthase (401 aa).

Residues 9–17 and alanine 35 each bind ATP; that span reads AFSGGLDTS. L-citrulline is bound by residues tyrosine 88 and serine 93. Glycine 117 is a binding site for ATP. L-aspartate contacts are provided by threonine 119, asparagine 123, and aspartate 124. Position 123 (asparagine 123) interacts with L-citrulline. Positions 127 and 273 each coordinate L-citrulline.

Belongs to the argininosuccinate synthase family. Type 1 subfamily. In terms of assembly, homotetramer.

Its subcellular location is the cytoplasm. The catalysed reaction is L-citrulline + L-aspartate + ATP = 2-(N(omega)-L-arginino)succinate + AMP + diphosphate + H(+). It participates in amino-acid biosynthesis; L-arginine biosynthesis; L-arginine from L-ornithine and carbamoyl phosphate: step 2/3. The protein is Argininosuccinate synthase of Xylella fastidiosa (strain Temecula1 / ATCC 700964).